Reading from the N-terminus, the 319-residue chain is Phosphatidylglycerol--prolipoprotein diacylglyceryl transferase (319 aa).

Transmembrane regions (helical) follow at residues 21–41 (PIPI…AIWL), 50–70 (GGNP…GIIG), and 98–118 (NGGL…AVFF). Arginine 144 contacts a 1,2-diacyl-sn-glycero-3-phospho-(1'-sn-glycerol). 2 helical membrane passes run 191–211 (VHPT…LLMW) and 254–274 (INTI…FLLK). Residues 295 to 319 (AVASPDGKPLPKAGEGIDGETPSTR) form a disordered region.

The protein belongs to the Lgt family.

Its subcellular location is the cell membrane. It carries out the reaction L-cysteinyl-[prolipoprotein] + a 1,2-diacyl-sn-glycero-3-phospho-(1'-sn-glycerol) = an S-1,2-diacyl-sn-glyceryl-L-cysteinyl-[prolipoprotein] + sn-glycerol 1-phosphate + H(+). Its pathway is protein modification; lipoprotein biosynthesis (diacylglyceryl transfer). Its function is as follows. Catalyzes the transfer of the diacylglyceryl group from phosphatidylglycerol to the sulfhydryl group of the N-terminal cysteine of a prolipoprotein, the first step in the formation of mature lipoproteins. In Corynebacterium glutamicum (strain R), this protein is Phosphatidylglycerol--prolipoprotein diacylglyceryl transferase.